A 473-amino-acid polypeptide reads, in one-letter code: Serine palmitoyltransferase 1 (473 aa).

At 1–15 the chain is on the lumenal side; that stretch reads MAMAAEQWVLVEMVQ. An interaction with SPTLC2 region spans residues 1 to 66; sequence MAMAAEQWVL…KEELIEEWQP (66 aa). The chain crosses the membrane as a helical span at residues 16-36; sequence ALYEAPAYHLILEGILILWII. Residues 37–473 are Cytoplasmic-facing; sequence RLVFSKTYKL…IREAAQAVLL (437 aa). A Phosphotyrosine; by ABL modification is found at tyrosine 164.

Belongs to the class-II pyridoxal-phosphate-dependent aminotransferase family. In terms of assembly, component of the serine palmitoyltransferase (SPT) complex, which is also composed of SPTLC2 or SPTLC3 and SPTSSA or SPTSSB. The heterodimer with SPTLC2 or SPTLC3 forms the catalytic core of the enzyme, while SPTSSA or SPTSSB subunits determine substrate specificity. SPT also interacts with ORMDL proteins, especially ORMDL3, which negatively regulate SPT activity in the presence of ceramides. Forms dimers of heterodimers with SPTLC2. Interacts with RTN4. It depends on pyridoxal 5'-phosphate as a cofactor. Post-translationally, phosphorylation at Tyr-164 inhibits activity and promotes cell survival.

It localises to the endoplasmic reticulum membrane. It catalyses the reaction L-serine + hexadecanoyl-CoA + H(+) = 3-oxosphinganine + CO2 + CoA. The enzyme catalyses octadecanoyl-CoA + L-serine + H(+) = 3-oxoeicosasphinganine + CO2 + CoA. The catalysed reaction is tetradecanoyl-CoA + L-serine + H(+) = 3-oxohexadecasphinganine + CO2 + CoA. It carries out the reaction dodecanoyl-CoA + L-serine + H(+) = 3-oxotetradecasphinganine + CO2 + CoA. It participates in lipid metabolism; sphingolipid metabolism. Its activity is regulated as follows. SPT complex catalytic activity is negatively regulated by ORMDL proteins, including ORMDL3, in the presence of ceramides. This mechanism allows to maintain ceramide levels at sufficient concentrations for the production of complex sphingolipids, but which prevents the accumulation of ceramides to levels that trigger apoptosis. In terms of biological role, component of the serine palmitoyltransferase multisubunit enzyme (SPT) that catalyzes the initial and rate-limiting step in sphingolipid biosynthesis by condensing L-serine and activated acyl-CoA (most commonly palmitoyl-CoA) to form long-chain bases. The SPT complex is also composed of SPTLC2 or SPTLC3 and SPTSSA or SPTSSB. Within this complex, the heterodimer with SPTLC2 or SPTLC3 forms the catalytic core. The composition of the serine palmitoyltransferase (SPT) complex determines the substrate preference. The SPTLC1-SPTLC2-SPTSSA complex shows a strong preference for C16-CoA substrate, while the SPTLC1-SPTLC3-SPTSSA isozyme uses both C14-CoA and C16-CoA as substrates, with a slight preference for C14-CoA. The SPTLC1-SPTLC2-SPTSSB complex shows a strong preference for C18-CoA substrate, while the SPTLC1-SPTLC3-SPTSSB isozyme displays an ability to use a broader range of acyl-CoAs, without apparent preference. Required for adipocyte cell viability and metabolic homeostasis. The sequence is that of Serine palmitoyltransferase 1 (SPTLC1) from Cricetulus griseus (Chinese hamster).